The chain runs to 237 residues: Ribonuclease PH (237 aa).

Residues arginine 86 and 124-126 (GTR) contribute to the phosphate site.

This sequence belongs to the RNase PH family. As to quaternary structure, homohexameric ring arranged as a trimer of dimers.

The catalysed reaction is tRNA(n+1) + phosphate = tRNA(n) + a ribonucleoside 5'-diphosphate. In terms of biological role, phosphorolytic 3'-5' exoribonuclease that plays an important role in tRNA 3'-end maturation. Removes nucleotide residues following the 3'-CCA terminus of tRNAs; can also add nucleotides to the ends of RNA molecules by using nucleoside diphosphates as substrates, but this may not be physiologically important. Probably plays a role in initiation of 16S rRNA degradation (leading to ribosome degradation) during starvation. The polypeptide is Ribonuclease PH (Zymomonas mobilis subsp. mobilis (strain ATCC 31821 / ZM4 / CP4)).